A 350-amino-acid chain; its full sequence is D-alanine--D-alanine ligase (350 aa).

The 209-residue stretch at 138–346 folds into the ATP-grasp domain; it reads KSAFSSAGLS…LEQLVHKLIQ (209 aa). Position 173–228 (173–228) interacts with ATP; the sequence is ERELNYPCFVKPANLGSSVGISKVRSRQELEAGLEQAAALDPRLVVEQGVNAREVE. Residues Asp299, Glu313, and Asn315 each coordinate Mg(2+).

Belongs to the D-alanine--D-alanine ligase family. Mg(2+) serves as cofactor. The cofactor is Mn(2+).

It localises to the cytoplasm. It carries out the reaction 2 D-alanine + ATP = D-alanyl-D-alanine + ADP + phosphate + H(+). Its pathway is cell wall biogenesis; peptidoglycan biosynthesis. In terms of biological role, cell wall formation. This Synechococcus sp. (strain CC9605) protein is D-alanine--D-alanine ligase.